The chain runs to 284 residues: Ubiquitin thioesterase otubain-like (284 aa).

In terms of domain architecture, OTU spans 77-274 (GEIRYIRGDG…PGHYDVIYKK (198 aa)). Asp-85 is a catalytic residue. The Nucleophile role is filled by Cys-88. Ile-176 lines the substrate pocket. Residues His-245 and His-267 contribute to the active site.

This sequence belongs to the peptidase C65 family.

The catalysed reaction is Thiol-dependent hydrolysis of ester, thioester, amide, peptide and isopeptide bonds formed by the C-terminal Gly of ubiquitin (a 76-residue protein attached to proteins as an intracellular targeting signal).. In terms of biological role, hydrolase that can remove conjugated ubiquitin from proteins and plays an important regulatory role at the level of protein turnover by preventing degradation. Specifically cleaves 'Lys-48'-linked polyubiquitin. In Caenorhabditis elegans, this protein is Ubiquitin thioesterase otubain-like (otub-1).